The primary structure comprises 282 residues: ATP phosphoribosyltransferase (282 aa).

It belongs to the ATP phosphoribosyltransferase family. Long subfamily. Requires Mg(2+) as cofactor.

The protein resides in the cytoplasm. It catalyses the reaction 1-(5-phospho-beta-D-ribosyl)-ATP + diphosphate = 5-phospho-alpha-D-ribose 1-diphosphate + ATP. It participates in amino-acid biosynthesis; L-histidine biosynthesis; L-histidine from 5-phospho-alpha-D-ribose 1-diphosphate: step 1/9. With respect to regulation, feedback inhibited by histidine. Functionally, catalyzes the condensation of ATP and 5-phosphoribose 1-diphosphate to form N'-(5'-phosphoribosyl)-ATP (PR-ATP). Has a crucial role in the pathway because the rate of histidine biosynthesis seems to be controlled primarily by regulation of HisG enzymatic activity. The sequence is that of ATP phosphoribosyltransferase from Micrococcus luteus (strain ATCC 4698 / DSM 20030 / JCM 1464 / CCM 169 / CCUG 5858 / IAM 1056 / NBRC 3333 / NCIMB 9278 / NCTC 2665 / VKM Ac-2230) (Micrococcus lysodeikticus).